A 247-amino-acid polypeptide reads, in one-letter code: Cobalt transport protein CbiM (247 aa).

Residues 1–21 form the signal peptide; it reads MVGWGVLILLMVLWLPRQAYA. The next 7 helical transmembrane spans lie at 27–47, 64–84, 96–116, 119–139, 159–179, 181–201, and 202–222; these read GYLPLGWCLFWAALCLPALIL, LVLALSAAFAFVLSALKLPSV, LGAVLFGPMAMSVVGCIILLF, LLLAHGGITTLGANTFSMAVV, GVAVFLAAALGDLSTYLTTSL, LALAFPAPIGGVASSFWKFAS, and IFAVTQVPLAVSEGLLTVIMV.

It belongs to the CbiM family. In terms of assembly, forms an energy-coupling factor (ECF) transporter complex composed of an ATP-binding protein (A component, CbiO), a transmembrane protein (T component, CbiQ) and 2 possible substrate-capture proteins (S components, CbiM and CbiN) of unknown stoichimetry.

It is found in the cell membrane. It functions in the pathway cofactor biosynthesis; adenosylcobalamin biosynthesis. Functionally, part of the energy-coupling factor (ECF) transporter complex CbiMNOQ involved in cobalt import. The chain is Cobalt transport protein CbiM from Kyrpidia tusciae (strain DSM 2912 / NBRC 15312 / T2) (Bacillus tusciae).